The primary structure comprises 459 residues: Putrescine aminotransferase (459 aa).

Pyridoxal 5'-phosphate-binding positions include 150 to 151 (GT) and Gln274. Lys300 is subject to N6-(pyridoxal phosphate)lysine. A pyridoxal 5'-phosphate-binding site is contributed by Thr332.

The protein belongs to the class-III pyridoxal-phosphate-dependent aminotransferase family. Putrescine aminotransferase subfamily. Requires pyridoxal 5'-phosphate as cofactor.

It catalyses the reaction an alkane-alpha,omega-diamine + 2-oxoglutarate = an omega-aminoaldehyde + L-glutamate. The enzyme catalyses putrescine + 2-oxoglutarate = 1-pyrroline + L-glutamate + H2O. It carries out the reaction cadaverine + 2-oxoglutarate = 5-aminopentanal + L-glutamate. It participates in amine and polyamine degradation; putrescine degradation; 4-aminobutanal from putrescine (transaminase route): step 1/1. Catalyzes the aminotransferase reaction from putrescine to 2-oxoglutarate, leading to glutamate and 4-aminobutanal, which spontaneously cyclizes to form 1-pyrroline. This is the first step in one of two pathways for putrescine degradation, where putrescine is converted into 4-aminobutanoate (gamma-aminobutyrate or GABA) via 4-aminobutanal. Also functions as a cadaverine transaminase in a a L-lysine degradation pathway to succinate that proceeds via cadaverine, glutarate and L-2-hydroxyglutarate. The protein is Putrescine aminotransferase of Escherichia coli (strain SMS-3-5 / SECEC).